Reading from the N-terminus, the 171-residue chain is Vimentin-type intermediate filament-associated coiled-coil protein (171 aa).

A coiled-coil region spans residues 7-98; the sequence is LQIREANAHL…QRDQMIQELQ (92 aa). Residues 126–171 form a disordered region; it reads ELGPLPSSHSHGAQLLPDGPGPPLGNSMREEEGQDDQQPAVFGTTV.

As to expression, expressed in brain, heart, kidney, liver, lung, skeletal muscle, spleen and testis. Within the kidney expression is pronounced within glomeruli.

It is found in the cytoplasm. In Rattus norvegicus (Rat), this protein is Vimentin-type intermediate filament-associated coiled-coil protein (Vmac).